Here is a 342-residue protein sequence, read N- to C-terminus: tRNA N6-adenosine threonylcarbamoyltransferase (342 aa).

Fe cation is bound by residues His111 and His115. Substrate contacts are provided by residues 134 to 138 (LVSGG), Asp167, Gly180, and Asn277. Asp305 is a binding site for Fe cation.

The protein belongs to the KAE1 / TsaD family. It depends on Fe(2+) as a cofactor.

Its subcellular location is the cytoplasm. The enzyme catalyses L-threonylcarbamoyladenylate + adenosine(37) in tRNA = N(6)-L-threonylcarbamoyladenosine(37) in tRNA + AMP + H(+). Functionally, required for the formation of a threonylcarbamoyl group on adenosine at position 37 (t(6)A37) in tRNAs that read codons beginning with adenine. Is involved in the transfer of the threonylcarbamoyl moiety of threonylcarbamoyl-AMP (TC-AMP) to the N6 group of A37, together with TsaE and TsaB. TsaD likely plays a direct catalytic role in this reaction. This chain is tRNA N6-adenosine threonylcarbamoyltransferase, found in Haemophilus influenzae (strain ATCC 51907 / DSM 11121 / KW20 / Rd).